A 63-amino-acid polypeptide reads, in one-letter code: Large ribosomal subunit protein bL32 (63 aa).

The segment at 1 to 27 is disordered; the sequence is MANPKAKMSKSRRDKRRAQFNARTKPA. Residues 7–18 show a composition bias toward basic residues; the sequence is KMSKSRRDKRRA.

This sequence belongs to the bacterial ribosomal protein bL32 family.

In Pelodictyon phaeoclathratiforme (strain DSM 5477 / BU-1), this protein is Large ribosomal subunit protein bL32.